The chain runs to 205 residues: Small ribosomal subunit protein uS4 (205 aa).

The disordered stretch occupies residues 18 to 46 (NIWGRPKSPVNRREYGPGQHGQRRKGKLS). In terms of domain architecture, S4 RNA-binding spans 94-154 (RRLDAVVYRA…EASKQLAHVL (61 aa)).

This sequence belongs to the universal ribosomal protein uS4 family. In terms of assembly, part of the 30S ribosomal subunit. Contacts protein S5. The interaction surface between S4 and S5 is involved in control of translational fidelity.

In terms of biological role, one of the primary rRNA binding proteins, it binds directly to 16S rRNA where it nucleates assembly of the body of the 30S subunit. With S5 and S12 plays an important role in translational accuracy. This chain is Small ribosomal subunit protein uS4, found in Bradyrhizobium diazoefficiens (strain JCM 10833 / BCRC 13528 / IAM 13628 / NBRC 14792 / USDA 110).